Reading from the N-terminus, the 329-residue chain is CDP-diacylglycerol--glycerol-3-phosphate 3-phosphatidyltransferase 1, chloroplastic (329 aa).

The transit peptide at 1–38 directs the protein to the chloroplast; that stretch reads MAFLKTLNPLLRRSPTPIPNPRSLLSLDAFLAASSPTA. 4 helical membrane passes run 150–170, 190–210, 217–237, and 300–320; these read PVIG…TLAL, VFGS…VAIA, LHPG…GGAV, and ITVL…GYGI.

Belongs to the CDP-alcohol phosphatidyltransferase class-I family. Mn(2+) is required as a cofactor.

It is found in the plastid. The protein resides in the chloroplast membrane. It catalyses the reaction a CDP-1,2-diacyl-sn-glycerol + sn-glycerol 3-phosphate = a 1,2-diacyl-sn-glycero-3-phospho-(1'-sn-glycero-3'-phosphate) + CMP + H(+). It functions in the pathway phospholipid metabolism; phosphatidylglycerol biosynthesis; phosphatidylglycerol from CDP-diacylglycerol: step 1/2. Its function is as follows. Catalyzes the committed step to the synthesis of the acidic phospholipids. Transfers specifically a phosphatidyl group from CDP-diacylglycerol to glycerol-3-phosphate to form phosphatidylglycerophosphate. The sequence is that of CDP-diacylglycerol--glycerol-3-phosphate 3-phosphatidyltransferase 1, chloroplastic from Oryza sativa subsp. japonica (Rice).